A 508-amino-acid chain; its full sequence is Cyclic AMP-responsive element-binding protein 5 (508 aa).

The C2H2-type zinc-finger motif lies at 16 to 40 (FVCSAPGCSQRFPTEDHLMIHRHKH). Residue Lys50 forms a Glycyl lysine isopeptide (Lys-Gly) (interchain with G-Cter in SUMO2) linkage. A phosphothreonine mark is found at Thr59 and Thr61. Ser137 carries the phosphoserine modification. Residues 265 to 391 (RQDQTPHHHM…LERNRAAATR (127 aa)) form a disordered region. 2 stretches are compositionally biased toward basic residues: residues 271–280 (HHHMHSHPHQ) and 289–326 (PYPHQHQHPAHHPHPQPHHQQNHPHHHSHSHLHAHPAH). Over residues 337–346 (TGNQAQVSPA) the composition is skewed to polar residues. Over residues 347-357 (TQQMQPTQTIQ) the composition is skewed to low complexity. Positions 369-386 (VVDEDPDERRRKFLERNR) are enriched in basic and acidic residues. In terms of domain architecture, bZIP spans 375 to 438 (DERRRKFLER…AQLKQLLLTH (64 aa)). The tract at residues 377-397 (RRRKFLERNRAAATRCRQKRK) is basic motif. A leucine-zipper region spans residues 403–431 (LEKKAEELTQTNMQLQNEVSMLKNEVAQL). The interval 449 to 468 (ESQGYLSPESSPPASPVPAC) is disordered.

Belongs to the bZIP family. In terms of assembly, binds DNA as a homodimer or as a heterodimer with JUN or ATF2/CREBP1.

The protein localises to the nucleus. Functionally, binds to the cAMP response element and activates transcription. This Homo sapiens (Human) protein is Cyclic AMP-responsive element-binding protein 5 (CREB5).